We begin with the raw amino-acid sequence, 235 residues long: Protein FAM3B (235 aa).

The first 29 residues, 1–29 (MRPLAGGLLKVVFVVFASLCAWYSGYLLA), serve as a signal peptide directing secretion. Intrachain disulfides connect Cys-63-Cys-91 and Cys-69-Cys-229. The GG-type lectin domain maps to 72-233 (DTYAYRLLSG…IQIEGCIPKE (162 aa)). Residues Asn-120 and Asn-208 are each glycosylated (N-linked (GlcNAc...) asparagine).

Belongs to the FAM3 family. Post-translationally, 2 N-termini have been observed in the mature protein: the first at Glu-30, resulting from signal peptide cleavage, the second at Ser-46. In terms of processing, O-glycosylated. Highly expressed in the pancreas. Also found in the colon, kidney, prostate, small intestine and testis.

The protein resides in the secreted. Its function is as follows. Induces apoptosis of alpha and beta cells in a dose- and time-dependent manner. The polypeptide is Protein FAM3B (FAM3B) (Homo sapiens (Human)).